Here is a 370-residue protein sequence, read N- to C-terminus: UDP-galactose transporter homolog 1 (370 aa).

10 helical membrane passes run 22–42 (ALTL…WSIL), 62–82 (IIIN…YNYV), 115–135 (CNVL…SPIG), 145–165 (LAYL…HFIF), 175–195 (YLVA…HVTT), 204–224 (TLLG…TNST), 242–262 (LMSL…IIFH), 280–300 (LIDI…IFII), 307–327 (IILI…SVIL), and 333–353 (SWEQ…EAFI).

This sequence belongs to the nucleotide-sugar transporter family. SLC35B subfamily.

The protein localises to the endoplasmic reticulum membrane. Its function is as follows. May be involved in specific transport of UDP-Gal from the cytosol to the Golgi lumen. Involved in the maintenance of optimal conditions for the folding of secretory pathway proteins in the endoplasmic reticulum. The polypeptide is UDP-galactose transporter homolog 1 (HUT1) (Candida albicans (strain SC5314 / ATCC MYA-2876) (Yeast)).